We begin with the raw amino-acid sequence, 302 residues long: uncharacterized protein (302 aa).

One can recognise an S4 RNA-binding domain in the interval Gln-19 to Asn-90. Asp-138 is an active-site residue. The segment at Lys-182 to Gly-205 is disordered.

This sequence belongs to the pseudouridine synthase RluA family.

The enzyme catalyses a uridine in RNA = a pseudouridine in RNA. This is an uncharacterized protein from Bacillus subtilis (strain 168).